A 400-amino-acid polypeptide reads, in one-letter code: NADH-quinone oxidoreductase subunit D (400 aa).

Belongs to the complex I 49 kDa subunit family. As to quaternary structure, NDH-1 is composed of 14 different subunits. Subunits NuoB, C, D, E, F, and G constitute the peripheral sector of the complex.

It is found in the cell inner membrane. It catalyses the reaction a quinone + NADH + 5 H(+)(in) = a quinol + NAD(+) + 4 H(+)(out). In terms of biological role, NDH-1 shuttles electrons from NADH, via FMN and iron-sulfur (Fe-S) centers, to quinones in the respiratory chain. The immediate electron acceptor for the enzyme in this species is believed to be a menaquinone. Couples the redox reaction to proton translocation (for every two electrons transferred, four hydrogen ions are translocated across the cytoplasmic membrane), and thus conserves the redox energy in a proton gradient. The polypeptide is NADH-quinone oxidoreductase subunit D (Chlorobium chlorochromatii (strain CaD3)).